Consider the following 499-residue polypeptide: NAD(P)H-quinone oxidoreductase chain 4, chloroplastic (499 aa).

14 helical membrane passes run 4 to 24 (LPWL…IPLF), 31 to 51 (MIRW…TYIF), 87 to 107 (IGLI…AWPV), 113 to 130 (LLHF…GLFA), 134 to 154 (ILLF…LLSM), 167 to 187 (FLLY…SMGL), 211 to 231 (ILLY…FPLH), 242 to 262 (HYST…YGLI), 274 to 294 (SLFS…AALT), 305 to 325 (IAYS…SMTY), 330 to 350 (GAIL…FLVG), 386 to 406 (LALP…GVIT), 416 to 436 (IIIT…LLSM), and 462 to 482 (LFIL…PDLV).

This sequence belongs to the complex I subunit 4 family.

The protein localises to the plastid. Its subcellular location is the chloroplast thylakoid membrane. The catalysed reaction is a plastoquinone + NADH + (n+1) H(+)(in) = a plastoquinol + NAD(+) + n H(+)(out). It catalyses the reaction a plastoquinone + NADPH + (n+1) H(+)(in) = a plastoquinol + NADP(+) + n H(+)(out). This chain is NAD(P)H-quinone oxidoreductase chain 4, chloroplastic, found in Cryptomeria japonica (Japanese cedar).